Consider the following 35-residue polypeptide: Dermonecrotic toxin LdSicTox-alpha-1 (35 aa).

His11 is an active-site residue. The Mg(2+) site is built by Glu31 and Asp33.

It belongs to the arthropod phospholipase D family. Class I subfamily. Mg(2+) serves as cofactor. Contains 1 disulfide bond. As to expression, expressed by the venom gland.

The protein resides in the secreted. It carries out the reaction an N-(acyl)-sphingosylphosphocholine = an N-(acyl)-sphingosyl-1,3-cyclic phosphate + choline. The catalysed reaction is an N-(acyl)-sphingosylphosphoethanolamine = an N-(acyl)-sphingosyl-1,3-cyclic phosphate + ethanolamine. It catalyses the reaction a 1-acyl-sn-glycero-3-phosphocholine = a 1-acyl-sn-glycero-2,3-cyclic phosphate + choline. The enzyme catalyses a 1-acyl-sn-glycero-3-phosphoethanolamine = a 1-acyl-sn-glycero-2,3-cyclic phosphate + ethanolamine. Its function is as follows. Dermonecrotic toxins cleave the phosphodiester linkage between the phosphate and headgroup of certain phospholipids (sphingolipid and lysolipid substrates), forming an alcohol (often choline) and a cyclic phosphate. This toxin acts on sphingomyelin (SM). It may also act on ceramide phosphoethanolamine (CPE), lysophosphatidylcholine (LPC) and lysophosphatidylethanolamine (LPE), but not on lysophosphatidylserine (LPS), and lysophosphatidylglycerol (LPG). It acts by transphosphatidylation, releasing exclusively cyclic phosphate products as second products. Induces dermonecrosis, hemolysis, increased vascular permeability, edema, inflammatory response, and platelet aggregation. The protein is Dermonecrotic toxin LdSicTox-alpha-1 of Loxosceles deserta (Desert recluse spider).